The chain runs to 225 residues: Heptaprenylglyceryl phosphate synthase (225 aa).

Lys-6 is a binding site for sn-glycerol 1-phosphate. Residues Asp-8 and Thr-34 each coordinate Mg(2+). Sn-glycerol 1-phosphate contacts are provided by residues 153-158 (YIEYSG), Gly-183, and 203-204 (GN).

This sequence belongs to the GGGP/HepGP synthase family. Group I subfamily. In terms of assembly, homodimer. The cofactor is Mg(2+).

It catalyses the reaction sn-glycerol 1-phosphate + all-trans-heptaprenyl diphosphate = 3-heptaprenyl-sn-glycero-1-phosphate + diphosphate. The protein operates within membrane lipid metabolism; glycerophospholipid metabolism. In terms of biological role, prenyltransferase that catalyzes in vivo the transfer of the heptaprenyl moiety of heptaprenyl pyrophosphate (HepPP; 35 carbon atoms) to the C3 hydroxyl of sn-glycerol-1-phosphate (G1P), producing heptaprenylglyceryl phosphate (HepGP). This reaction is an ether-bond-formation step in the biosynthesis of archaea-type G1P-based membrane lipids found in Bacillales. The protein is Heptaprenylglyceryl phosphate synthase of Listeria welshimeri serovar 6b (strain ATCC 35897 / DSM 20650 / CCUG 15529 / CIP 8149 / NCTC 11857 / SLCC 5334 / V8).